A 329-amino-acid polypeptide reads, in one-letter code: Octaprenyl diphosphate synthase (329 aa).

The isopentenyl diphosphate site is built by Lys51, Arg54, and His83. 2 residues coordinate Mg(2+): Asp90 and Asp94. Arg99 provides a ligand contact to an all-trans-polyprenyl diphosphate. Arg100 is an isopentenyl diphosphate binding site. Residues Lys176, Thr177, and Gln214 each contribute to the an all-trans-polyprenyl diphosphate site.

The protein belongs to the FPP/GGPP synthase family. It depends on Mg(2+) as a cofactor.

The enzyme catalyses 5 isopentenyl diphosphate + (2E,6E)-farnesyl diphosphate = all-trans-octaprenyl diphosphate + 5 diphosphate. Supplies octaprenyl diphosphate, the precursor for the side chain of the isoprenoid quinones ubiquinone and menaquinone. The polypeptide is Octaprenyl diphosphate synthase (ispB) (Haemophilus influenzae (strain ATCC 51907 / DSM 11121 / KW20 / Rd)).